Reading from the N-terminus, the 315-residue chain is Protein TIFY 4B (315 aa).

Residues 113 to 145 (CHRRDSPRSAEFSGSSGQFVADKDSHKTVSVSP) form a disordered region. The 36-residue stretch at 151-186 (TNAVVGQMTIFYSGKVNVYDGVPPEKARSIMHFAAN) folds into the Tify domain. Positions 233–260 (QANRKVSLQRYLEKRKDRRFSKTKKAPG) match the Jas motif. The Nuclear localization signal motif lies at 235-242 (NRKVSLQR). Basic residues predominate over residues 248–257 (KDRRFSKTKK). Residues 248-315 (KDRRFSKTKK…LNSDLNSEDN (68 aa)) are disordered. Residues 293–315 (PENQTKSPNISVDLNSDLNSEDN) show a composition bias toward polar residues.

Belongs to the TIFY/JAZ family. In terms of assembly, interacts with AFPH2/NINJA.

Its subcellular location is the nucleus. In terms of biological role, regulates the arrest of dispersed meristematic cells during lamina development. The sequence is that of Protein TIFY 4B (TIFY4B) from Arabidopsis thaliana (Mouse-ear cress).